Here is a 66-residue protein sequence, read N- to C-terminus: Toxin BomPI (66 aa).

Residues 2–64 enclose the LCN-type CS-alpha/beta domain; sequence RDAYIAQPEN…VPIRIEGKCH (63 aa). 4 disulfide bridges follow: Cys-12–Cys-63, Cys-16–Cys-36, Cys-22–Cys-46, and Cys-26–Cys-48.

This sequence belongs to the long (4 C-C) scorpion toxin superfamily. Sodium channel inhibitor family. Alpha subfamily. Expressed by the venom gland.

It is found in the secreted. Alpha toxins bind voltage-independently at site-3 of sodium channels (Nav) and inhibit the inactivation of the activated channels, thereby blocking neuronal transmission. This is Toxin BomPI from Buthus occitanus mardochei (Moroccan scorpion).